Here is a 718-residue protein sequence, read N- to C-terminus: Polyribonucleotide nucleotidyltransferase (718 aa).

Positions 497 and 503 each coordinate Mg(2+). One can recognise a KH domain in the interval 564–623 (PRLLTMRIDPDMIGLVIGPGGKTVKSITEQTKTKIDIDDDGTVTISASEAEQAERAKQLI). The S1 motif domain occupies 633–701 (GEVYVGRVTR…NKGRLNLTRL (69 aa)).

It belongs to the polyribonucleotide nucleotidyltransferase family. Mg(2+) serves as cofactor.

It is found in the cytoplasm. The enzyme catalyses RNA(n+1) + phosphate = RNA(n) + a ribonucleoside 5'-diphosphate. In terms of biological role, involved in mRNA degradation. Catalyzes the phosphorolysis of single-stranded polyribonucleotides processively in the 3'- to 5'-direction. This is Polyribonucleotide nucleotidyltransferase from Gloeothece citriformis (strain PCC 7424) (Cyanothece sp. (strain PCC 7424)).